Consider the following 174-residue polypeptide: ATP synthase subunit delta, sodium ion specific (174 aa).

The protein belongs to the ATPase delta chain family. F-type ATPases have 2 components, F(1) - the catalytic core - and F(0) - the membrane proton channel. F(1) has five subunits: alpha(3), beta(3), gamma(1), delta(1), epsilon(1). F(0) has three main subunits: a(1), b(2) and c(10-14). The alpha and beta chains form an alternating ring which encloses part of the gamma chain. F(1) is attached to F(0) by a central stalk formed by the gamma and epsilon chains, while a peripheral stalk is formed by the delta and b chains.

The protein localises to the cell inner membrane. In terms of biological role, f(1)F(0) ATP synthase produces ATP from ADP in the presence of a proton or sodium gradient. F-type ATPases consist of two structural domains, F(1) containing the extramembraneous catalytic core and F(0) containing the membrane proton channel, linked together by a central stalk and a peripheral stalk. During catalysis, ATP synthesis in the catalytic domain of F(1) is coupled via a rotary mechanism of the central stalk subunits to proton translocation. This protein is part of the stalk that links CF(0) to CF(1). It either transmits conformational changes from CF(0) to CF(1) or is implicated in proton conduction. The polypeptide is ATP synthase subunit delta, sodium ion specific (Ilyobacter tartaricus).